A 33-amino-acid chain; its full sequence is Sucrose-6-phosphate hydrolase (33 aa).

15 to 18 contacts substrate; sequence PLQE. The active site involves E18.

It belongs to the glycosyl hydrolase 32 family.

It catalyses the reaction Hydrolysis of terminal non-reducing beta-D-fructofuranoside residues in beta-D-fructofuranosides.. Its pathway is glycan biosynthesis; sucrose metabolism. This is Sucrose-6-phosphate hydrolase from Fusobacterium mortiferum.